A 272-amino-acid polypeptide reads, in one-letter code: 5'-AMP-activated protein kinase subunit beta-2 (272 aa).

Residues 1-52 (MGNTTSDRVSGERHGAKAARSEGAGGHAPGKEHKIMVGSTDDPSVFSLPDSK) are disordered. Serine 39 is modified (phosphoserine). At threonine 40 the chain carries Phosphothreonine. Serine 69 is subject to Phosphoserine; by ULK1. A phosphoserine mark is found at serine 95 and serine 108. Threonine 148 carries the phosphothreonine modification. A phosphoserine mark is found at serine 158, serine 170, serine 174, and serine 184.

This sequence belongs to the 5'-AMP-activated protein kinase beta subunit family. In terms of assembly, AMPK is a heterotrimer of an alpha catalytic subunit (PRKAA1 or PRKAA2), a beta (PRKAB1 or PRKAB2) and a gamma non-catalytic subunits (PRKAG1, PRKAG2 or PRKAG3). Phosphorylated when associated with the catalytic subunit (PRKAA1 or PRKAA2). Phosphorylated by ULK1 and ULK2; leading to negatively regulate AMPK activity and suggesting the existence of a regulatory feedback loop between ULK1, ULK2 and AMPK.

Its function is as follows. Non-catalytic subunit of AMP-activated protein kinase (AMPK), an energy sensor protein kinase that plays a key role in regulating cellular energy metabolism. In response to reduction of intracellular ATP levels, AMPK activates energy-producing pathways and inhibits energy-consuming processes: inhibits protein, carbohydrate and lipid biosynthesis, as well as cell growth and proliferation. AMPK acts via direct phosphorylation of metabolic enzymes, and by longer-term effects via phosphorylation of transcription regulators. Also acts as a regulator of cellular polarity by remodeling the actin cytoskeleton; probably by indirectly activating myosin. Beta non-catalytic subunit acts as a scaffold on which the AMPK complex assembles, via its C-terminus that bridges alpha (PRKAA1 or PRKAA2) and gamma subunits (PRKAG1, PRKAG2 or PRKAG3). The polypeptide is 5'-AMP-activated protein kinase subunit beta-2 (PRKAB2) (Homo sapiens (Human)).